We begin with the raw amino-acid sequence, 288 residues long: Beta-lactamase CARB-4 (288 aa).

Positions 1-17 (MKLLLVFSLLIPSMVFA) are cleaved as a signal peptide. Ser65 functions as the Acyl-ester intermediate in the catalytic mechanism. A disulfide bridge connects residues Cys72 and Cys118. 229–231 (RSG) is a binding site for substrate.

The protein belongs to the class-A beta-lactamase family.

The catalysed reaction is a beta-lactam + H2O = a substituted beta-amino acid. Inhibited by clavulanic acid and sulbactam. Hydrolyzes carbenicillin. Methicillin and oxacillin are weakly hydrolyzed. The sequence is that of Beta-lactamase CARB-4 (carB4) from Pseudomonas aeruginosa.